The following is a 425-amino-acid chain: Potassium/proton antiporter CemA (425 aa).

The helical transmembrane segment at 89–109 (LFLTTVKCLFILLFVPLGINF) threads the bilayer. Residues 159 to 278 (LSENQIFFGL…KTDFASVFRT (120 aa)) form an insert region. The segment at 173–192 (STFPSSEKSQKSEHFSNQDE) is disordered. Positions 180–192 (KSQKSEHFSNQDE) are enriched in basic and acidic residues. 3 consecutive transmembrane segments (helical) span residues 300–320 (IEAITNFFADVLSFITLCYLL), 350–370 (ILFITDLLVGYHSPNIWELFF), and 386–406 (IFLLVATLPVLLDVLFKYLIF).

It belongs to the CemA family.

The protein localises to the plastid. The protein resides in the chloroplast inner membrane. It carries out the reaction K(+)(in) + H(+)(out) = K(+)(out) + H(+)(in). Contributes to K(+)/H(+) antiport activity by supporting proton efflux to control proton extrusion and homeostasis in chloroplasts in a light-dependent manner to modulate photosynthesis. Prevents excessive induction of non-photochemical quenching (NPQ) under continuous-light conditions. Indirectly promotes efficient inorganic carbon uptake into chloroplasts. This chain is Potassium/proton antiporter CemA, found in Tetradesmus obliquus (Green alga).